The sequence spans 185 residues: Capsid protein (185 aa).

Positions 136–185 (NAPILSTLPETTVVRRRDRGRSPRRRTPSPRRRRSQSPRRRRSQSRESQC) are disordered. Residues 149 to 178 (VRRRDRGRSPRRRTPSPRRRRSQSPRRRRS) are compositionally biased toward basic residues. Phosphoserine; by host is present on residues S157, S164, and S172. One copy of the 1; half-length repeat lies at 157 to 163 (SPRRRTP). A 3 X 8 AA repeats of S-P-R-R-R-[PR]-S-Q region spans residues 157–179 (SPRRRTPSPRRRRSQSPRRRRSQ). The Bipartite nuclear localization signal motif lies at 160–177 (RRTPSPRRRRSQSPRRRR). A run of 2 repeats spans residues 164–171 (SPRRRRSQ) and 172–179 (SPRRRRSQ). The segment at 179–185 (QSRESQC) is RNA binding.

Belongs to the orthohepadnavirus core antigen family. In terms of assembly, homodimerizes, then multimerizes. Interacts with cytosol exposed regions of viral L glycoprotein present in the reticulum-to-Golgi compartment. Interacts with human FLNB. Phosphorylated form interacts with host importin alpha; this interaction depends on the exposure of the NLS, which itself depends upon genome maturation and/or phosphorylation of the capsid protein. Interacts with host NUP153. Phosphorylated by host SRPK1, SRPK2, and maybe protein kinase C or GAPDH. Phosphorylation is critical for pregenomic RNA packaging. Protein kinase C phosphorylation is stimulated by HBx protein and may play a role in transport of the viral genome to the nucleus at the late step during the viral replication cycle.

The protein localises to the virion. The protein resides in the host cytoplasm. Self assembles to form an icosahedral capsid. Most capsids appear to be large particles with an icosahedral symmetry of T=4 and consist of 240 copies of capsid protein, though a fraction forms smaller T=3 particles consisting of 180 capsid proteins. Entering capsids are transported along microtubules to the nucleus. Phosphorylation of the capsid is thought to induce exposure of nuclear localization signal in the C-terminal portion of the capsid protein that allows binding to the nuclear pore complex via the importin (karyopherin-) alpha and beta. Capsids are imported in intact form through the nuclear pore into the nuclear basket, where it probably binds NUP153. Only capsids that contain the mature viral genome can release the viral DNA and capsid protein into the nucleoplasm. Immature capsids get stuck in the basket. Capsids encapsulate the pre-genomic RNA and the P protein. Pre-genomic RNA is reverse-transcribed into DNA while the capsid is still in the cytoplasm. The capsid can then either be directed to the nucleus, providing more genomes for transcription, or bud through the endoplasmic reticulum to provide new virions. The polypeptide is Capsid protein (Hepatitis B virus genotype A1 subtype adw (isolate Philippines/pFDW294/1988) (HBV-A)).